Reading from the N-terminus, the 773-residue chain is Polyribonucleotide nucleotidyltransferase (773 aa).

Mg(2+) contacts are provided by aspartate 490 and aspartate 496. Residues 557–616 (PKIDTITIPVDKIKVVIGKGGEQIDKIIAETGVKIDIDDEGLCSIFSSDQAAIDRAKEII) form the KH domain. The 69-residue stretch at 626-694 (GEIYDAKVVR…DKGRVDASMR (69 aa)) folds into the S1 motif domain. Over residues 700-721 (PEGYVEPERKPRERRENGDRRK) the composition is skewed to basic and acidic residues. Residues 700-773 (PEGYVEPERK…FPELSTKKPE (74 aa)) form a disordered region. The span at 739 to 748 (RNNQGNKVGN) shows a compositional bias: low complexity. Positions 751 to 773 (FELRERKSHIDEEFPELSTKKPE) are enriched in basic and acidic residues.

The protein belongs to the polyribonucleotide nucleotidyltransferase family. It depends on Mg(2+) as a cofactor.

The protein localises to the cytoplasm. It carries out the reaction RNA(n+1) + phosphate = RNA(n) + a ribonucleoside 5'-diphosphate. Its function is as follows. Involved in mRNA degradation. Catalyzes the phosphorolysis of single-stranded polyribonucleotides processively in the 3'- to 5'-direction. The chain is Polyribonucleotide nucleotidyltransferase from Lactococcus lactis subsp. lactis (strain IL1403) (Streptococcus lactis).